Here is a 355-residue protein sequence, read N- to C-terminus: 3-dehydroquinate synthase (355 aa).

NAD(+) is bound by residues 71-76, 105-109, 129-130, Lys-142, and Lys-151; these read EGEASK, GVVGD, and TS. Positions 184, 246, and 263 each coordinate Zn(2+).

This sequence belongs to the sugar phosphate cyclases superfamily. Dehydroquinate synthase family. Co(2+) is required as a cofactor. The cofactor is Zn(2+). Requires NAD(+) as cofactor.

It localises to the cytoplasm. It carries out the reaction 7-phospho-2-dehydro-3-deoxy-D-arabino-heptonate = 3-dehydroquinate + phosphate. Its pathway is metabolic intermediate biosynthesis; chorismate biosynthesis; chorismate from D-erythrose 4-phosphate and phosphoenolpyruvate: step 2/7. Functionally, catalyzes the conversion of 3-deoxy-D-arabino-heptulosonate 7-phosphate (DAHP) to dehydroquinate (DHQ). This is 3-dehydroquinate synthase from Streptococcus sanguinis (strain SK36).